Here is a 298-residue protein sequence, read N- to C-terminus: MRQRTIERSVEVVGIGLHKGVPVTMRLEPLEENSGILFYRKDKNRYIELKPQNVVDTKMATVIGKDGVVISTIEHLMSAVYGYGIDNLLIILDNDEVPIMDGSAISYCMLLDEAGIMEQKSTKKVLRIKNEVEVRDGDKYVRLKPADTLSFDFTIHFDHPVIGKEHYHFEFSKKNFLEEIARARTFGFLHEVQYLRSIGLAQGGSLDNAIVLDEKKILNPDGLRFEDEFVRHKILDAIGDLSLLGMPVMGLYESFAGSHHLNHLLTVKLLEECSNYEIVEASTTTQEGYVIGAACAKE.

Zn(2+) is bound by residues H75, H232, and D236. H259 functions as the Proton donor in the catalytic mechanism.

This sequence belongs to the LpxC family. Zn(2+) is required as a cofactor.

The enzyme catalyses a UDP-3-O-[(3R)-3-hydroxyacyl]-N-acetyl-alpha-D-glucosamine + H2O = a UDP-3-O-[(3R)-3-hydroxyacyl]-alpha-D-glucosamine + acetate. It participates in glycolipid biosynthesis; lipid IV(A) biosynthesis; lipid IV(A) from (3R)-3-hydroxytetradecanoyl-[acyl-carrier-protein] and UDP-N-acetyl-alpha-D-glucosamine: step 2/6. In terms of biological role, catalyzes the hydrolysis of UDP-3-O-myristoyl-N-acetylglucosamine to form UDP-3-O-myristoylglucosamine and acetate, the committed step in lipid A biosynthesis. The polypeptide is UDP-3-O-acyl-N-acetylglucosamine deacetylase (Nitratiruptor sp. (strain SB155-2)).